A 451-amino-acid chain; its full sequence is mRNA cleavage and polyadenylation factor CLP1 (451 aa).

ATP is bound by residues Glu-33, Lys-72, and 133 to 138 (NTGKTA).

This sequence belongs to the Clp1 family. Clp1 subfamily. Component of a pre-mRNA cleavage factor complex. Interacts directly with PCF11.

It is found in the nucleus. Functionally, required for endonucleolytic cleavage during polyadenylation-dependent pre-mRNA 3'-end formation. This chain is mRNA cleavage and polyadenylation factor CLP1, found in Vanderwaltozyma polyspora (strain ATCC 22028 / DSM 70294 / BCRC 21397 / CBS 2163 / NBRC 10782 / NRRL Y-8283 / UCD 57-17) (Kluyveromyces polysporus).